The sequence spans 286 residues: Putative electron transfer flavoprotein subunit YgcQ (286 aa).

FAD is bound at residue 225 to 253; it reads VCIVVGASGAAALMAGVRNSKFVVAINHD.

It belongs to the ETF alpha-subunit/FixB family. YgcQ and YgcR form a heterodimer.

In terms of biological role, may play a role in a redox process. In Escherichia coli (strain K12), this protein is Putative electron transfer flavoprotein subunit YgcQ (ygcQ).